Here is a 119-residue protein sequence, read N- to C-terminus: Large ribosomal subunit protein bL20 (119 aa).

This sequence belongs to the bacterial ribosomal protein bL20 family.

Its function is as follows. Binds directly to 23S ribosomal RNA and is necessary for the in vitro assembly process of the 50S ribosomal subunit. It is not involved in the protein synthesizing functions of that subunit. This chain is Large ribosomal subunit protein bL20, found in Enterococcus faecalis (strain ATCC 700802 / V583).